A 227-amino-acid polypeptide reads, in one-letter code: Phosphoribosylformylglycinamidine synthase subunit PurQ (227 aa).

Residues 3 to 227 enclose the Glutamine amidotransferase type-1 domain; that stretch reads FAVCVFPGSN…LMLWYSLLSD (225 aa). Catalysis depends on C86, which acts as the Nucleophile. Residues H203 and E205 contribute to the active site.

As to quaternary structure, part of the FGAM synthase complex composed of 1 PurL, 1 PurQ and 2 PurS subunits.

Its subcellular location is the cytoplasm. It catalyses the reaction N(2)-formyl-N(1)-(5-phospho-beta-D-ribosyl)glycinamide + L-glutamine + ATP + H2O = 2-formamido-N(1)-(5-O-phospho-beta-D-ribosyl)acetamidine + L-glutamate + ADP + phosphate + H(+). The enzyme catalyses L-glutamine + H2O = L-glutamate + NH4(+). It participates in purine metabolism; IMP biosynthesis via de novo pathway; 5-amino-1-(5-phospho-D-ribosyl)imidazole from N(2)-formyl-N(1)-(5-phospho-D-ribosyl)glycinamide: step 1/2. Part of the phosphoribosylformylglycinamidine synthase complex involved in the purines biosynthetic pathway. Catalyzes the ATP-dependent conversion of formylglycinamide ribonucleotide (FGAR) and glutamine to yield formylglycinamidine ribonucleotide (FGAM) and glutamate. The FGAM synthase complex is composed of three subunits. PurQ produces an ammonia molecule by converting glutamine to glutamate. PurL transfers the ammonia molecule to FGAR to form FGAM in an ATP-dependent manner. PurS interacts with PurQ and PurL and is thought to assist in the transfer of the ammonia molecule from PurQ to PurL. The protein is Phosphoribosylformylglycinamidine synthase subunit PurQ of Aquifex aeolicus (strain VF5).